A 140-amino-acid chain; its full sequence is Large ribosomal subunit protein uL11 (140 aa).

It belongs to the universal ribosomal protein uL11 family. In terms of assembly, part of the ribosomal stalk of the 50S ribosomal subunit. Interacts with L10 and the large rRNA to form the base of the stalk. L10 forms an elongated spine to which L12 dimers bind in a sequential fashion forming a multimeric L10(L12)X complex. In terms of processing, one or more lysine residues are methylated.

Forms part of the ribosomal stalk which helps the ribosome interact with GTP-bound translation factors. This chain is Large ribosomal subunit protein uL11, found in Syntrophobacter fumaroxidans (strain DSM 10017 / MPOB).